The sequence spans 206 residues: Large ribosomal subunit protein bL25 (206 aa).

Residues 184 to 206 form a disordered region; it reads AEEAAAEVAEPEVIKKGKEEEEE. Positions 195–206 are enriched in basic and acidic residues; the sequence is EVIKKGKEEEEE.

The protein belongs to the bacterial ribosomal protein bL25 family. CTC subfamily. As to quaternary structure, part of the 50S ribosomal subunit; part of the 5S rRNA/L5/L18/L25 subcomplex. Contacts the 5S rRNA. Binds to the 5S rRNA independently of L5 and L18.

This is one of the proteins that binds to the 5S RNA in the ribosome where it forms part of the central protuberance. The chain is Large ribosomal subunit protein bL25 from Thermus thermophilus (strain ATCC BAA-163 / DSM 7039 / HB27).